The chain runs to 188 residues: Elongation factor P (188 aa).

The protein belongs to the elongation factor P family.

It localises to the cytoplasm. The protein operates within protein biosynthesis; polypeptide chain elongation. Involved in peptide bond synthesis. Stimulates efficient translation and peptide-bond synthesis on native or reconstituted 70S ribosomes in vitro. Probably functions indirectly by altering the affinity of the ribosome for aminoacyl-tRNA, thus increasing their reactivity as acceptors for peptidyl transferase. The polypeptide is Elongation factor P (Pelodictyon phaeoclathratiforme (strain DSM 5477 / BU-1)).